A 37-amino-acid chain; its full sequence is MVEALLSGIVLGLIPITLAGLFVTAYLQYRRGDQLDL.

The helical transmembrane segment at 5–25 (LLSGIVLGLIPITLAGLFVTA) threads the bilayer.

It belongs to the PetG family. As to quaternary structure, the 4 large subunits of the cytochrome b6-f complex are cytochrome b6, subunit IV (17 kDa polypeptide, PetD), cytochrome f and the Rieske protein, while the 4 small subunits are PetG, PetL, PetM and PetN. The complex functions as a dimer.

It is found in the plastid. Its subcellular location is the chloroplast thylakoid membrane. Component of the cytochrome b6-f complex, which mediates electron transfer between photosystem II (PSII) and photosystem I (PSI), cyclic electron flow around PSI, and state transitions. PetG is required for either the stability or assembly of the cytochrome b6-f complex. This chain is Cytochrome b6-f complex subunit 5, found in Angiopteris evecta (Mule's foot fern).